A 594-amino-acid polypeptide reads, in one-letter code: Arginine--tRNA ligase (594 aa).

Positions 139-149 (ANPTGPLHVGH) match the 'HIGH' region motif.

It belongs to the class-I aminoacyl-tRNA synthetase family. In terms of assembly, monomer.

The protein resides in the cytoplasm. It catalyses the reaction tRNA(Arg) + L-arginine + ATP = L-arginyl-tRNA(Arg) + AMP + diphosphate. The chain is Arginine--tRNA ligase from Paraburkholderia phymatum (strain DSM 17167 / CIP 108236 / LMG 21445 / STM815) (Burkholderia phymatum).